The following is a 181-amino-acid chain: MSFVPSKVFFTKGVGRHKEYLSSFELALRDAKIEKCNLVTVSSIFPPKCERVSVEEGVKMLTPGQITFAVMARNSTNEYNRLIAASIGVAIPADDTQYGYLSEHHPFGEDAEQSGEYAEDLAATMLATTLGIEFDPNKDWDEREGIYKMSGKIINSYNITQSAEGENGMWTTVISCAVLLP.

A Pyruvic acid (Ser) modification is found at Ser43.

Belongs to the PdaD family. Pyruvate serves as cofactor.

It carries out the reaction L-arginine + H(+) = agmatine + CO2. The sequence is that of Probable pyruvoyl-dependent arginine decarboxylase from Chlorobium luteolum (strain DSM 273 / BCRC 81028 / 2530) (Pelodictyon luteolum).